The following is a 524-amino-acid chain: Ribonuclease Y (524 aa).

The chain crosses the membrane as a helical span at residues 2-22; sequence GIVINLFLIIAASIVFFVVGF. The KH domain occupies 214-299; that stretch reads ALSVVHIQSD…KAYQDAKKEI (86 aa). The HD domain occupies 340 to 432; the sequence is LLQHSREVAM…VDAANIVSLS (93 aa).

It belongs to the RNase Y family.

It localises to the cell membrane. Functionally, endoribonuclease that initiates mRNA decay. The chain is Ribonuclease Y from Chlorobaculum tepidum (strain ATCC 49652 / DSM 12025 / NBRC 103806 / TLS) (Chlorobium tepidum).